The following is a 137-amino-acid chain: 6,7-dimethyl-8-ribityllumazine synthase (137 aa).

5-amino-6-(D-ribitylamino)uracil contacts are provided by residues phenylalanine 11, 43-45 (SFD), and 67-69 (CVI). Residue 72–73 (DT) participates in (2S)-2-hydroxy-3-oxobutyl phosphate binding. Histidine 75 serves as the catalytic Proton donor. Leucine 100 lines the 5-amino-6-(D-ribitylamino)uracil pocket. Arginine 115 contributes to the (2S)-2-hydroxy-3-oxobutyl phosphate binding site.

This sequence belongs to the DMRL synthase family. As to quaternary structure, forms an icosahedral capsid composed of 60 subunits, arranged as a dodecamer of pentamers.

The enzyme catalyses (2S)-2-hydroxy-3-oxobutyl phosphate + 5-amino-6-(D-ribitylamino)uracil = 6,7-dimethyl-8-(1-D-ribityl)lumazine + phosphate + 2 H2O + H(+). It functions in the pathway cofactor biosynthesis; riboflavin biosynthesis; riboflavin from 2-hydroxy-3-oxobutyl phosphate and 5-amino-6-(D-ribitylamino)uracil: step 1/2. Its function is as follows. Catalyzes the formation of 6,7-dimethyl-8-ribityllumazine by condensation of 5-amino-6-(D-ribitylamino)uracil with 3,4-dihydroxy-2-butanone 4-phosphate. This is the penultimate step in the biosynthesis of riboflavin. This Methanococcus maripaludis (strain DSM 14266 / JCM 13030 / NBRC 101832 / S2 / LL) protein is 6,7-dimethyl-8-ribityllumazine synthase.